The primary structure comprises 169 residues: uncharacterized protein (169 aa).

The protein resides in the mitochondrion. This is an uncharacterized protein from Marchantia polymorpha (Common liverwort).